We begin with the raw amino-acid sequence, 185 residues long: Large ribosomal subunit protein uL5 (185 aa).

This sequence belongs to the universal ribosomal protein uL5 family. Part of the 50S ribosomal subunit; contacts the 5S rRNA and probably tRNA. Forms a bridge to the 30S subunit in the 70S ribosome.

Functionally, this is one of the proteins that bind and probably mediate the attachment of the 5S RNA into the large ribosomal subunit, where it forms part of the central protuberance. In the 70S ribosome it contacts protein S13 of the 30S subunit (bridge B1b), connecting the 2 subunits; this bridge is implicated in subunit movement. May contact the P site tRNA; the 5S rRNA and some of its associated proteins might help stabilize positioning of ribosome-bound tRNAs. In Haloquadratum walsbyi (strain DSM 16790 / HBSQ001), this protein is Large ribosomal subunit protein uL5.